The following is a 431-amino-acid chain: Tol-Pal system protein TolB (431 aa).

A signal peptide spans 1–26 (MRLMTKLGFRALVASCLIAAGAAANA). Positions 411–431 (PQILSVQGGSVREPSWGPFMQ) are disordered.

This sequence belongs to the TolB family. In terms of assembly, the Tol-Pal system is composed of five core proteins: the inner membrane proteins TolA, TolQ and TolR, the periplasmic protein TolB and the outer membrane protein Pal. They form a network linking the inner and outer membranes and the peptidoglycan layer.

Its subcellular location is the periplasm. In terms of biological role, part of the Tol-Pal system, which plays a role in outer membrane invagination during cell division and is important for maintaining outer membrane integrity. The polypeptide is Tol-Pal system protein TolB (Burkholderia ambifaria (strain ATCC BAA-244 / DSM 16087 / CCUG 44356 / LMG 19182 / AMMD) (Burkholderia cepacia (strain AMMD))).